A 287-amino-acid polypeptide reads, in one-letter code: ATP synthase gamma chain (287 aa).

Belongs to the ATPase gamma chain family. In terms of assembly, F-type ATPases have 2 components, CF(1) - the catalytic core - and CF(0) - the membrane proton channel. CF(1) has five subunits: alpha(3), beta(3), gamma(1), delta(1), epsilon(1). CF(0) has three main subunits: a, b and c.

It localises to the cell inner membrane. In terms of biological role, produces ATP from ADP in the presence of a proton gradient across the membrane. The gamma chain is believed to be important in regulating ATPase activity and the flow of protons through the CF(0) complex. The chain is ATP synthase gamma chain from Ectopseudomonas mendocina (strain ymp) (Pseudomonas mendocina).